The sequence spans 820 residues: Mitogen-activated protein kinase kinase kinase kinase 2 (820 aa).

Residues 16 to 273 (FELLQRVGAG…AEKLLQHPFT (258 aa)) form the Protein kinase domain. ATP contacts are provided by residues 22-30 (VGAGTYGDV) and lysine 45. Aspartate 136 (proton acceptor) is an active-site residue. The segment at 294–314 (LGTPSPEDCELETYDMFPDTI) is PEST1. A Phosphoserine modification is found at serine 328. The tract at residues 344-360 (ETDPLNEPWEEEWTLLG) is PEST2. Residues 387 to 442 (SEFQELDSPDDTMGTIKRAPFLGPLPTDPPAEEPLSSPPGTLPPPPSGPNSSPLLP) form a disordered region. Serine 394 carries the post-translational modification Phosphoserine. Residues 405–448 (APFLGPLPTDPPAEEPLSSPPGTLPPPPSGPNSSPLLPTAWATM) are PEST3. The span at 422 to 434 (SSPPGTLPPPPSG) shows a compositional bias: pro residues. The 312-residue stretch at 482-793 (PLRIHAAVTW…IFRVLGAHRD (312 aa)) folds into the CNH domain.

It belongs to the protein kinase superfamily. STE Ser/Thr protein kinase family. STE20 subfamily. In terms of assembly, interacts with TRAF2, TRAF6, MAP3K1/MEKK1 and MAP3K11/MLK3. Interacts with RAB8A. It depends on Mg(2+) as a cofactor. Polyubiquitinated through 'Lys-48'-polyubiquitin chains, allowing proteasomal turnover. Ubiquitination requires the kinase activity of MAP4K2/GCK. Post-translationally, autophosphorylated in response to tumor necrosis factor (TNF), endotoxins or pro-inflammatory stimuli. Autophosphorylation leads to activation. As to expression, highly expressed in germinal center but not mantle zone B-cells. Also expressed in lung, brain and placenta and at lower levels in other tissues examined.

Its subcellular location is the cytoplasm. The protein resides in the basolateral cell membrane. It localises to the golgi apparatus membrane. The enzyme catalyses L-seryl-[protein] + ATP = O-phospho-L-seryl-[protein] + ADP + H(+). It carries out the reaction L-threonyl-[protein] + ATP = O-phospho-L-threonyl-[protein] + ADP + H(+). Its activity is regulated as follows. The tumor necrosis factor (TNF), as well as endotoxins and pro-inflammatory stimuli such as polyinosine-polycytidine (poly(IC)), lipopolysaccharides (LPS), peptidoglycan (PGN), flagellin, or lipid A activate MAP4K2 by promoting its autophosphorylation. Functionally, serine/threonine-protein kinase which acts as an essential component of the MAP kinase signal transduction pathway. Acts as a MAPK kinase kinase kinase (MAP4K) and is an upstream activator of the stress-activated protein kinase/c-Jun N-terminal kinase (SAP/JNK) signaling pathway and to a lesser extent of the p38 MAPKs signaling pathway. Required for the efficient activation of JNKs by TRAF6-dependent stimuli, including pathogen-associated molecular patterns (PAMPs) such as polyinosine-polycytidine (poly(IC)), lipopolysaccharides (LPS), lipid A, peptidoglycan (PGN), or bacterial flagellin. To a lesser degree, IL-1 and engagement of CD40 also stimulate MAP4K2-mediated JNKs activation. The requirement for MAP4K2/GCK is most pronounced for LPS signaling, and extends to LPS stimulation of c-Jun phosphorylation and induction of IL-8. Enhances MAP3K1 oligomerization, which may relieve N-terminal mediated MAP3K1 autoinhibition and lead to activation following autophosphorylation. Also mediates the SAP/JNK signaling pathway and the p38 MAPKs signaling pathway through activation of the MAP3Ks MAP3K10/MLK2 and MAP3K11/MLK3. May play a role in the regulation of vesicle targeting or fusion. regulation of vesicle targeting or fusion. Activator of the Hippo signaling pathway which plays a pivotal role in organ size control and tumor suppression by restricting proliferation and promoting apoptosis. MAP4Ks act in parallel to and are partially redundant with STK3/MST2 and STK4/MST2 in the phosphorylation and activation of LATS1/2, and establish MAP4Ks as components of the expanded Hippo pathway. This Homo sapiens (Human) protein is Mitogen-activated protein kinase kinase kinase kinase 2.